The sequence spans 696 residues: DEAD-box ATP-dependent RNA helicase 7 (696 aa).

Positions 1 to 116 are disordered; sequence MPSLPVAAAE…GDEDPADPNA (116 aa). Residues 16–97 adopt a coiled-coil conformation; that stretch reads ESASKKSKRK…KVVVEEEEED (82 aa). Basic and acidic residues predominate over residues 27–38; that stretch reads KAAEVEVEASSR. The span at 39–49 shows a compositional bias: basic residues; that stretch reads KKEKKEKKRKA. Over residues 67–77 the composition is skewed to low complexity; the sequence is STSSDEPAPAA. A compositionally biased stretch (acidic residues) spans 92–112; it reads EEEEEDDDEGELTASGDEDPA. The Q motif signature appears at 115–143; it reads NALANFRISESLREKLKSKGIKALFPIQA. The Helicase ATP-binding domain maps to 146 to 328; that stretch reads FDLVLDGHDL…LRFLKSGKKT (183 aa). ATP is bound at residue 159 to 166; sequence ARTGQGKT. Positions 274-277 match the DEAD box motif; that stretch reads DEAD. The region spanning 357–500 is the Helicase C-terminal domain; sequence QVIPDIIRCY…ISAPQPTDVA (144 aa). Residues 641–696 form a disordered region; that stretch reads LPPLQEREQSGGSRGGGRFGNRRFSGGGGGRGGGGRGFGGGRGRGGGGGNRFNKRY. Gly residues predominate over residues 652 to 690; sequence GSRGGGRFGNRRFSGGGGGRGGGGRGFGGGRGRGGGGGN.

The protein belongs to the DEAD box helicase family. DDX21/DDX50 subfamily.

The protein localises to the nucleus. It carries out the reaction ATP + H2O = ADP + phosphate + H(+). The protein is DEAD-box ATP-dependent RNA helicase 7 of Oryza sativa subsp. japonica (Rice).